Reading from the N-terminus, the 351-residue chain is Transaldolase (351 aa).

Residue lysine 138 is the Schiff-base intermediate with substrate of the active site.

This sequence belongs to the transaldolase family. Type 2 subfamily.

The protein localises to the cytoplasm. The catalysed reaction is D-sedoheptulose 7-phosphate + D-glyceraldehyde 3-phosphate = D-erythrose 4-phosphate + beta-D-fructose 6-phosphate. It functions in the pathway carbohydrate degradation; pentose phosphate pathway; D-glyceraldehyde 3-phosphate and beta-D-fructose 6-phosphate from D-ribose 5-phosphate and D-xylulose 5-phosphate (non-oxidative stage): step 2/3. Functionally, transaldolase is important for the balance of metabolites in the pentose-phosphate pathway. The protein is Transaldolase of Neisseria gonorrhoeae (strain ATCC 700825 / FA 1090).